The chain runs to 108 residues: Large ribosomal subunit protein uL24 (108 aa).

This sequence belongs to the universal ribosomal protein uL24 family. In terms of assembly, part of the 50S ribosomal subunit.

In terms of biological role, one of two assembly initiator proteins, it binds directly to the 5'-end of the 23S rRNA, where it nucleates assembly of the 50S subunit. Its function is as follows. One of the proteins that surrounds the polypeptide exit tunnel on the outside of the subunit. The protein is Large ribosomal subunit protein uL24 of Frankia casuarinae (strain DSM 45818 / CECT 9043 / HFP020203 / CcI3).